The sequence spans 303 residues: Glycine--tRNA ligase alpha subunit (303 aa).

Belongs to the class-II aminoacyl-tRNA synthetase family. As to quaternary structure, tetramer of two alpha and two beta subunits.

The protein localises to the cytoplasm. It carries out the reaction tRNA(Gly) + glycine + ATP = glycyl-tRNA(Gly) + AMP + diphosphate. The protein is Glycine--tRNA ligase alpha subunit of Salmonella arizonae (strain ATCC BAA-731 / CDC346-86 / RSK2980).